A 1857-amino-acid polypeptide reads, in one-letter code: Fer-1-like protein 6 (1857 aa).

The Cytoplasmic portion of the chain corresponds to methionine 1–tyrosine 1824. A disordered region spans residues lysine 15–proline 63. Residues glutamate 37–alanine 53 are compositionally biased toward basic and acidic residues. C2 domains lie at arginine 65–asparagine 181 and proline 225–phenylalanine 356. Basic and acidic residues predominate over residues serine 426–lysine 447. The segment at serine 426 to proline 469 is disordered. Residues serine 448 to glutamate 459 are compositionally biased toward polar residues. 2 C2 domains span residues glycine 810–tyrosine 937 and proline 969–isoleucine 1099. Residues aspartate 842, aspartate 848, aspartate 904, and aspartate 906 each coordinate Ca(2+). Disordered stretches follow at residues glutamine 1101–aspartate 1148, proline 1161–alanine 1203, and alanine 1224–valine 1246. Residues aspartate 1113–aspartate 1129 show a composition bias toward polar residues. Over residues proline 1178–lysine 1189 the composition is skewed to basic and acidic residues. Basic residues predominate over residues proline 1190–arginine 1200. The span at lysine 1226–glutamate 1245 shows a compositional bias: basic and acidic residues. C2 domains are found at residues aspartate 1338–glycine 1457 and aspartate 1578–aspartate 1729. Aspartate 1372, aspartate 1378, aspartate 1427, aspartate 1429, and aspartate 1435 together coordinate Ca(2+). A helical transmembrane segment spans residues isoleucine 1825–leucine 1845. Residues proline 1846–serine 1857 are Extracellular-facing.

The protein belongs to the ferlin family. It depends on Ca(2+) as a cofactor.

The protein resides in the membrane. This is Fer-1-like protein 6 (FER1L6) from Homo sapiens (Human).